Here is a 303-residue protein sequence, read N- to C-terminus: Siderophore enterobactin esterase (303 aa).

This sequence belongs to the esterase D family. In terms of assembly, homodimer.

It carries out the reaction enterobactin + 3 H2O = 3 N-(2,3-dihydroxybenzoyl)-L-serine + 2 H(+). Its function is as follows. Displays specific enterobactin (ENB) esterase activity required for intracellular release of iron. Enterobactin is a xenosiderophore that is selectively produced by Gram-negative Enterobacteriaceae. The affinity for enterobactin is quite high, potentially due to the low natural abundance of this xenosiderophore in fungal habitats. Does not hydrolyze triacetylfusarinine C (TAFC). In Emericella nidulans (strain FGSC A4 / ATCC 38163 / CBS 112.46 / NRRL 194 / M139) (Aspergillus nidulans), this protein is Siderophore enterobactin esterase.